Here is a 385-residue protein sequence, read N- to C-terminus: MLHNTFFICETNQIMNEIEKAKGIILNRNMNDIWSALLIEVKKSNLIIKSTDRNIFFESTISIVSETDFKVLINASNFYDAVKAFNFYKKIKIVFNENNSKLEIMGELNDEKEEYEDHLKEPTFSYEEIENYNYDMVNEDYTFGIEIKQKSFKKVINRIAFSAHLDESKNVLNGVYFSKDEDSKLLLVSTNGHRMSICKTEVIVEEDVNFIVPVKIFNFLKHLMSGEGMVKIKFSDKKFYVEFDNYKIACSLINGNYPDYKSIIPKEQKNKSLVSLGILKDRLARVNLYVDKSRKLVLTFSELQLKLLGEDLITGRKGEFFIKDPNYLYDGADEVMAINISYFVEAISVFETSKIEIQFNSGNVLKLSEPENFNFTHLIMPMSLG.

The protein belongs to the beta sliding clamp family. Forms a ring-shaped head-to-tail homodimer around DNA which binds and tethers DNA polymerases and other proteins to the DNA. The DNA replisome complex has a single clamp-loading complex (3 tau and 1 each of delta, delta', psi and chi subunits) which binds 3 Pol III cores (1 core on the leading strand and 2 on the lagging strand) each with a beta sliding clamp dimer. Additional proteins in the replisome are other copies of gamma, psi and chi, Ssb, DNA helicase and RNA primase.

Its subcellular location is the cytoplasm. In terms of biological role, confers DNA tethering and processivity to DNA polymerases and other proteins. Acts as a clamp, forming a ring around DNA (a reaction catalyzed by the clamp-loading complex) which diffuses in an ATP-independent manner freely and bidirectionally along dsDNA. Initially characterized for its ability to contact the catalytic subunit of DNA polymerase III (Pol III), a complex, multichain enzyme responsible for most of the replicative synthesis in bacteria; Pol III exhibits 3'-5' exonuclease proofreading activity. The beta chain is required for initiation of replication as well as for processivity of DNA replication. In Borreliella burgdorferi (strain ATCC 35210 / DSM 4680 / CIP 102532 / B31) (Borrelia burgdorferi), this protein is Beta sliding clamp (dnaN).